The following is a 76-amino-acid chain: MAIFDDIKEVVVEQLNVNPEEVKEESKFVEDLGADSLDVVELVMALEEKFNIEIPDEEAEKIATVGDVVRYIETNK.

The Carrier domain maps to 1 to 76 (MAIFDDIKEV…DVVRYIETNK (76 aa)). At serine 36 the chain carries O-(pantetheine 4'-phosphoryl)serine.

This sequence belongs to the acyl carrier protein (ACP) family. In terms of processing, 4'-phosphopantetheine is transferred from CoA to a specific serine of apo-ACP by AcpS. This modification is essential for activity because fatty acids are bound in thioester linkage to the sulfhydryl of the prosthetic group.

It is found in the cytoplasm. The protein operates within lipid metabolism; fatty acid biosynthesis. In terms of biological role, carrier of the growing fatty acid chain in fatty acid biosynthesis. This is Acyl carrier protein from Wolinella succinogenes (strain ATCC 29543 / DSM 1740 / CCUG 13145 / JCM 31913 / LMG 7466 / NCTC 11488 / FDC 602W) (Vibrio succinogenes).